We begin with the raw amino-acid sequence, 151 residues long: 3-dehydroquinate dehydratase 1 (151 aa).

Y24 acts as the Proton acceptor in catalysis. Residues N75, H81, and D88 each contribute to the substrate site. The Proton donor role is filled by H101. Substrate-binding positions include 102–103 and R112; that span reads IS.

The protein belongs to the type-II 3-dehydroquinase family. Homododecamer.

The enzyme catalyses 3-dehydroquinate = 3-dehydroshikimate + H2O. The protein operates within metabolic intermediate biosynthesis; chorismate biosynthesis; chorismate from D-erythrose 4-phosphate and phosphoenolpyruvate: step 3/7. Catalyzes a trans-dehydration via an enolate intermediate. The protein is 3-dehydroquinate dehydratase 1 (aroQ1) of Corynebacterium efficiens (strain DSM 44549 / YS-314 / AJ 12310 / JCM 11189 / NBRC 100395).